We begin with the raw amino-acid sequence, 403 residues long: Argininosuccinate synthase (403 aa).

Residues 12-20 (AYSGGLDTS) and Ala39 contribute to the ATP site. L-citrulline is bound by residues Tyr90 and Ser95. Gly120 contacts ATP. L-aspartate contacts are provided by Thr122, Asn126, and Asp127. Position 126 (Asn126) interacts with L-citrulline. L-citrulline-binding residues include Arg130, Ser182, Ser191, Glu267, and Tyr279.

This sequence belongs to the argininosuccinate synthase family. Type 1 subfamily. As to quaternary structure, homotetramer.

The protein resides in the cytoplasm. The enzyme catalyses L-citrulline + L-aspartate + ATP = 2-(N(omega)-L-arginino)succinate + AMP + diphosphate + H(+). The protein operates within amino-acid biosynthesis; L-arginine biosynthesis; L-arginine from L-ornithine and carbamoyl phosphate: step 2/3. This chain is Argininosuccinate synthase, found in Ruthia magnifica subsp. Calyptogena magnifica.